Here is a 265-residue protein sequence, read N- to C-terminus: Tryptophan synthase alpha chain (265 aa).

Active-site proton acceptor residues include E49 and D60.

The protein belongs to the TrpA family. In terms of assembly, tetramer of two alpha and two beta chains.

It catalyses the reaction (1S,2R)-1-C-(indol-3-yl)glycerol 3-phosphate + L-serine = D-glyceraldehyde 3-phosphate + L-tryptophan + H2O. Its pathway is amino-acid biosynthesis; L-tryptophan biosynthesis; L-tryptophan from chorismate: step 5/5. The alpha subunit is responsible for the aldol cleavage of indoleglycerol phosphate to indole and glyceraldehyde 3-phosphate. The sequence is that of Tryptophan synthase alpha chain from Ralstonia nicotianae (strain ATCC BAA-1114 / GMI1000) (Ralstonia solanacearum).